A 283-amino-acid polypeptide reads, in one-letter code: Phosphatidylserine decarboxylase proenzyme (283 aa).

Active-site charge relay system; for autoendoproteolytic cleavage activity residues include D96, H152, and S250. S250 acts as the Schiff-base intermediate with substrate; via pyruvic acid; for decarboxylase activity in catalysis. S250 carries the pyruvic acid (Ser); by autocatalysis modification.

It belongs to the phosphatidylserine decarboxylase family. PSD-B subfamily. Prokaryotic type I sub-subfamily. As to quaternary structure, heterodimer of a large membrane-associated beta subunit and a small pyruvoyl-containing alpha subunit. Pyruvate serves as cofactor. Is synthesized initially as an inactive proenzyme. Formation of the active enzyme involves a self-maturation process in which the active site pyruvoyl group is generated from an internal serine residue via an autocatalytic post-translational modification. Two non-identical subunits are generated from the proenzyme in this reaction, and the pyruvate is formed at the N-terminus of the alpha chain, which is derived from the carboxyl end of the proenzyme. The autoendoproteolytic cleavage occurs by a canonical serine protease mechanism, in which the side chain hydroxyl group of the serine supplies its oxygen atom to form the C-terminus of the beta chain, while the remainder of the serine residue undergoes an oxidative deamination to produce ammonia and the pyruvoyl prosthetic group on the alpha chain. During this reaction, the Ser that is part of the protease active site of the proenzyme becomes the pyruvoyl prosthetic group, which constitutes an essential element of the active site of the mature decarboxylase.

The protein resides in the cell membrane. The catalysed reaction is a 1,2-diacyl-sn-glycero-3-phospho-L-serine + H(+) = a 1,2-diacyl-sn-glycero-3-phosphoethanolamine + CO2. The protein operates within phospholipid metabolism; phosphatidylethanolamine biosynthesis; phosphatidylethanolamine from CDP-diacylglycerol: step 2/2. In terms of biological role, catalyzes the formation of phosphatidylethanolamine (PtdEtn) from phosphatidylserine (PtdSer). The chain is Phosphatidylserine decarboxylase proenzyme from Acinetobacter baumannii (strain ACICU).